An 868-amino-acid polypeptide reads, in one-letter code: V-set and immunoglobulin domain-containing protein 10-like (868 aa).

Residues 1-27 (MGLSWALLPFLLLAFRAELLALQPALG) form the signal peptide. Residues 26 to 52 (LGSQPPSASSSHSMGSSRDFVSNVSSS) are compositionally biased toward low complexity. Residues 26–82 (LGSQPPSASSSHSMGSSRDFVSNVSSSQHPQPPGSEASAGIPDSNRFPQGLNSSHVP) are disordered. Residues 28–763 (SQPPSASSSH…QAGSDLSPGA (736 aa)) lie on the Extracellular side of the membrane. N-linked (GlcNAc...) asparagine glycans are attached at residues Asn48, Asn77, and Asn88. A compositionally biased stretch (polar residues) spans 71 to 80 (RFPQGLNSSH). Disordered regions lie at residues 96–154 (LSPD…SGSK) and 323–342 (WSRD…EPPR). Polar residues-rich tracts occupy residues 99 to 108 (DVTSSETPPS) and 133 to 143 (PASQISVQTPD). Ig-like C2-type domains are found at residues 289-381 (PQLS…ADVS) and 389-474 (PVIR…SVFN). A disulfide bond links Cys311 and Cys365. Asn410 carries N-linked (GlcNAc...) asparagine glycosylation. Cys415 and Cys458 are joined by a disulfide. N-linked (GlcNAc...) asparagine glycans are attached at residues Asn474, Asn628, and Asn637. The helical transmembrane segment at 764–784 (IAGIVLGSLLGLALLAGLLIL) threads the bilayer. The Cytoplasmic segment spans residues 785-868 (CICCLRRYPG…PWTVRAATQV (84 aa)).

Its subcellular location is the membrane. The sequence is that of V-set and immunoglobulin domain-containing protein 10-like (Vsig10l) from Mus musculus (Mouse).